The sequence spans 322 residues: Atrochrysone carboxyl ACP thioesterase dmxR1 (322 aa).

Histidine 105, histidine 107, aspartate 109, and histidine 110 together coordinate Zn(2+). Residue aspartate 109 is the Proton donor/acceptor of the active site.

It belongs to the metallo-beta-lactamase superfamily. Requires Zn(2+) as cofactor.

The enzyme catalyses atrochrysone carboxyl-[ACP] + H2O = atrochrysone carboxylate + holo-[ACP] + H(+). It functions in the pathway secondary metabolite biosynthesis. Functionally, atrochrysone carboxyl ACP thioesterase; part of the gene cluster that mediates the biosynthesis of the dimeric xanthones cryptosporioptides. The pathway begins with the synthesis of atrochrysone thioester by the polyketide synthase dmx-nrPKS. The atrochrysone carboxyl ACP thioesterase dmxR1 then breaks the thioester bond and releases the atrochrysone carboxylic acid from dmx-nrPKS. Atrochrysone carboxylic acid is decarboxylated by the decarboxylase dmxR15, and oxidized by the anthrone oxygenase dmxR16 to yield emodin. Emodin is then reduced to emodin hydroquinone by the oxidoreductase dmxR7. A-ring reduction by the short chain dehydrogenase dmxR18, dehydration by the scytalone dehydratase-like protein dmxR17 and probable spontaneous re-oxidation, results in overall deoxygenation to chrysophanol. Baeyer-Villiger oxidation by the Baeyer-Villiger monooxygenase (BVMO) dmxR6 then yields monodictylactone in equilibrium with monodictyphenone. In the case of the cryptosporioptides biosynthesis, monodictylactone is reduced at C-12 to an alcohol (by the short chain dehydrogenases dmxR12 or dmxR8) and hydroxylated at C-5 by dmxR9, yielding the electron-rich aromatic which could eliminate H(2)O to form the ortho-quinonemethide, followed by tautomerisation to paraquinone and complete the formal reduction to produce the 10-methylgroup. Conjugate addition of C-4a-OH to the resulting paraquinone by the monooxygenase dmxR10 then gives cyclohexadienone, which is then reduced at C-5 by the short chain dehydrogenase dmxR3 to give the dihydroxanthone. The 6,7-epoxide in the cryptosporioptides could be introduced by the cytochrome P450 monooxygenase dmxL3. The highly reducing PKS dmxL2 manufactures butyrate, which is further carboxylated by dmxL1 to form ethylmalonate. It is not yet clear whether the carboxylation occurs while the butyrate is attached to the ACP of dmxL2, but this unusual fungal metabolite could then be esterified to O-5 by the O-acetyltransferase dmxR13. Finally, dimerization performed by dmxR5 gives the observed dimers cryptosporioptides A, B and C as the final products of the pathway. The protein is Atrochrysone carboxyl ACP thioesterase dmxR1 of Cryptosporiopsis sp. (strain 8999).